Consider the following 189-residue polypeptide: Peptidyl-tRNA hydrolase (189 aa).

A tRNA-binding site is contributed by Tyr-15. The active-site Proton acceptor is His-20. The tRNA site is built by Phe-66, Asn-68, and Asn-114.

This sequence belongs to the PTH family. In terms of assembly, monomer.

The protein resides in the cytoplasm. It catalyses the reaction an N-acyl-L-alpha-aminoacyl-tRNA + H2O = an N-acyl-L-amino acid + a tRNA + H(+). Functionally, hydrolyzes ribosome-free peptidyl-tRNAs (with 1 or more amino acids incorporated), which drop off the ribosome during protein synthesis, or as a result of ribosome stalling. Its function is as follows. Catalyzes the release of premature peptidyl moieties from peptidyl-tRNA molecules trapped in stalled 50S ribosomal subunits, and thus maintains levels of free tRNAs and 50S ribosomes. This is Peptidyl-tRNA hydrolase from Streptococcus pneumoniae (strain CGSP14).